Here is a 68-residue protein sequence, read N- to C-terminus: MNAKELHDKTPDQLREELANLKKTSFNLRFQQATGQLENPAQIRKARRDAARVKTILNQKAASAAASE.

This sequence belongs to the universal ribosomal protein uL29 family.

This chain is Large ribosomal subunit protein uL29, found in Roseobacter denitrificans (strain ATCC 33942 / OCh 114) (Erythrobacter sp. (strain OCh 114)).